We begin with the raw amino-acid sequence, 939 residues long: Isoleucine--tRNA ligase (939 aa).

The 'HIGH' region signature appears at 57-67 (PYANGHIHIGH). E563 lines the L-isoleucyl-5'-AMP pocket. Positions 604 to 608 (KMSKS) match the 'KMSKS' region motif. K607 is an ATP binding site. Zn(2+) is bound by residues C903, C906, C921, and C924.

This sequence belongs to the class-I aminoacyl-tRNA synthetase family. IleS type 1 subfamily. Monomer. The cofactor is Zn(2+).

The protein resides in the cytoplasm. The enzyme catalyses tRNA(Ile) + L-isoleucine + ATP = L-isoleucyl-tRNA(Ile) + AMP + diphosphate. Catalyzes the attachment of isoleucine to tRNA(Ile). As IleRS can inadvertently accommodate and process structurally similar amino acids such as valine, to avoid such errors it has two additional distinct tRNA(Ile)-dependent editing activities. One activity is designated as 'pretransfer' editing and involves the hydrolysis of activated Val-AMP. The other activity is designated 'posttransfer' editing and involves deacylation of mischarged Val-tRNA(Ile). The protein is Isoleucine--tRNA ligase of Sulfurihydrogenibium sp. (strain YO3AOP1).